A 122-amino-acid polypeptide reads, in one-letter code: Large ribosomal subunit protein uL14 (122 aa).

This sequence belongs to the universal ribosomal protein uL14 family. As to quaternary structure, part of the 50S ribosomal subunit. Forms a cluster with proteins L3 and L19. In the 70S ribosome, L14 and L19 interact and together make contacts with the 16S rRNA in bridges B5 and B8.

Binds to 23S rRNA. Forms part of two intersubunit bridges in the 70S ribosome. In Corynebacterium diphtheriae (strain ATCC 700971 / NCTC 13129 / Biotype gravis), this protein is Large ribosomal subunit protein uL14.